Reading from the N-terminus, the 559-residue chain is Leucine-rich repeat protein soc-2 (559 aa).

The segment covering methionine 1 to arginine 17 has biased composition (basic and acidic residues). The interval methionine 1–glycine 55 is disordered. 20 LRR repeats span residues glutamine 74–leucine 95, glutamine 97–leucine 118, asparagine 120–leucine 141, serine 143–isoleucine 164, serine 166–leucine 187, lysine 189–leucine 210, serine 212–cysteine 233, alanine 235–threonine 257, asparagine 258–cysteine 279, glutamine 281–methionine 302, lysine 305–glutamine 326, proline 329–lysine 350, arginine 353–tryptophan 374, serine 376–leucine 397, asparagine 399–leucine 420, lysine 422–leucine 443, histidine 445–leucine 466, serine 468–leucine 489, serine 491–cysteine 513, and serine 515–glycine 536.

Belongs to the SHOC2 family. As to quaternary structure, interacts with let-60.

Acts as a Ras effector and participates in MAPK pathway activation. Probably acts as a scaffolding protein in a protein phosphatase complex that specifically dephosphorylates Raf kinase and stimulates Raf activity at specialized signaling complexes upon Ras activation. Required for vulval development. Involved in fluid homeostasis. Plays a role in nicotinic acetylcholine receptor (nAChR)-mediated sensitivity to nicotine. This chain is Leucine-rich repeat protein soc-2 (soc-2), found in Caenorhabditis briggsae.